The chain runs to 177 residues: Adenine phosphoribosyltransferase (177 aa).

Belongs to the purine/pyrimidine phosphoribosyltransferase family. Homodimer.

It localises to the cytoplasm. The catalysed reaction is AMP + diphosphate = 5-phospho-alpha-D-ribose 1-diphosphate + adenine. It functions in the pathway purine metabolism; AMP biosynthesis via salvage pathway; AMP from adenine: step 1/1. Catalyzes a salvage reaction resulting in the formation of AMP, that is energically less costly than de novo synthesis. The polypeptide is Adenine phosphoribosyltransferase (Chlorobaculum tepidum (strain ATCC 49652 / DSM 12025 / NBRC 103806 / TLS) (Chlorobium tepidum)).